A 544-amino-acid chain; its full sequence is CTP synthase (544 aa).

Positions 1–267 are amidoligase domain; sequence MAKFVFITGG…CREVLDVLDL (267 aa). S13 is a binding site for CTP. Residue S13 coordinates UTP. Residues 14 to 19 and D71 each bind ATP; that span reads SIGKGI. Residues D71 and E141 each contribute to the Mg(2+) site. Residues 148 to 150, 188 to 193, and K224 each bind CTP; these read DIE and KTKPTQ. UTP contacts are provided by residues 188–193 and K224; that span reads KTKPTQ. The Glutamine amidotransferase type-1 domain occupies 292–534; that stretch reads KVALVGKYIQ…IEAAQQRLPS (243 aa). G354 contributes to the L-glutamine binding site. The active-site Nucleophile; for glutamine hydrolysis is the C381. Residues 382–385, E405, and R462 contribute to the L-glutamine site; that span reads LGMQ. Catalysis depends on residues H507 and E509.

This sequence belongs to the CTP synthase family. In terms of assembly, homotetramer.

The catalysed reaction is UTP + L-glutamine + ATP + H2O = CTP + L-glutamate + ADP + phosphate + 2 H(+). The enzyme catalyses L-glutamine + H2O = L-glutamate + NH4(+). It carries out the reaction UTP + NH4(+) + ATP = CTP + ADP + phosphate + 2 H(+). The protein operates within pyrimidine metabolism; CTP biosynthesis via de novo pathway; CTP from UDP: step 2/2. With respect to regulation, allosterically activated by GTP, when glutamine is the substrate; GTP has no effect on the reaction when ammonia is the substrate. The allosteric effector GTP functions by stabilizing the protein conformation that binds the tetrahedral intermediate(s) formed during glutamine hydrolysis. Inhibited by the product CTP, via allosteric rather than competitive inhibition. Its function is as follows. Catalyzes the ATP-dependent amination of UTP to CTP with either L-glutamine or ammonia as the source of nitrogen. Regulates intracellular CTP levels through interactions with the four ribonucleotide triphosphates. This is CTP synthase from Parasynechococcus marenigrum (strain WH8102).